Reading from the N-terminus, the 269-residue chain is Flagellar brake protein YcgR (269 aa).

The region spanning 134 to 254 is the PilZ domain; sequence QRRNFYRVTT…SRLLIQRYIT (121 aa).

Belongs to the YcgR family. As to quaternary structure, monomer. Interacts with the flagellar basal bodies.

It is found in the bacterial flagellum basal body. Functionally, acts as a flagellar brake, regulating swimming and swarming in a bis-(3'-5') cyclic diguanylic acid (c-di-GMP)-dependent manner. Binds 1 c-di-GMP dimer per subunit. Increasing levels of c-di-GMP lead to decreased motility. This is Flagellar brake protein YcgR from Nitrosomonas eutropha (strain DSM 101675 / C91 / Nm57).